Here is a 113-residue protein sequence, read N- to C-terminus: UPF0482 protein YnfB (113 aa).

The N-terminal stretch at methionine 1–alanine 28 is a signal peptide.

This sequence belongs to the UPF0482 family.

The chain is UPF0482 protein YnfB from Escherichia coli O127:H6 (strain E2348/69 / EPEC).